The sequence spans 242 residues: DnaJ homolog subfamily B member 3 (242 aa).

The region spanning 1 to 69 is the J domain; the sequence is MVDYYEVLGV…RKREVYDRCG (69 aa).

As to expression, testis specific. Expression is confined to the germline without any contribution of the somatic components.

May operate as a co-chaperone of the male germ cell- and haploid stage-specific Hsp70 proteins. This chain is DnaJ homolog subfamily B member 3 (Dnajb3), found in Mus musculus (Mouse).